A 524-amino-acid polypeptide reads, in one-letter code: Putative ATP-dependent RNA helicase R458 (524 aa).

The Helicase ATP-binding domain maps to 125-338 (VPELIQRKDT…NSYFRKYSPI (214 aa)). Residue 138–145 (FKSGTGKT) participates in ATP binding. Positions 268-271 (DEFD) match the DEFD box motif. The 152-residue stretch at 373 to 524 (IILDLLKQCR…QLPGDLSTLL (152 aa)) folds into the Helicase C-terminal domain.

The protein belongs to the DEAD box helicase family. eIF4A subfamily.

It carries out the reaction ATP + H2O = ADP + phosphate + H(+). In terms of biological role, putative ATP-dependent RNA helicase. This chain is Putative ATP-dependent RNA helicase R458, found in Acanthamoeba polyphaga mimivirus (APMV).